The following is a 449-amino-acid chain: Zinc finger and BTB domain-containing protein 14 (449 aa).

In terms of domain architecture, BTB spans 36–102 (CDIAIVVEDV…MYTAKISVKK (67 aa)). Lys-46 is covalently cross-linked (Glycyl lysine isopeptide (Lys-Gly) (interchain with G-Cter in SUMO2)). The Nuclear localization signal motif lies at 50-66 (HRCVLAACSTYFKKLFK). The segment at 153–194 (GDAADTQDDDVEEIGDQDDSPSDDTVEGTPPSQEDGKSPTTT) is disordered. Residues 157–178 (DTQDDDVEEIGDQDDSPSDDTV) are compositionally biased toward acidic residues. Residues Lys-203 and Lys-249 each participate in a glycyl lysine isopeptide (Lys-Gly) (interchain with G-Cter in SUMO2) cross-link. 5 consecutive C2H2-type zinc fingers follow at residues 277–304 (IACQ…ADRP), 305–332 (FVCE…GYKP), 333–360 (YSCE…NERP), 361–388 (FACH…GEKP), and 389–417 (FVCG…ERKQ).

The protein belongs to the krueppel C2H2-type zinc-finger protein family. As to quaternary structure, interacts with ZBTB21.

Its subcellular location is the nucleus. Its function is as follows. Transcriptional activator of the dopamine transporter (DAT), binding it's promoter at the consensus sequence 5'-CCTGCACAGTTCACGGA-3'. Binds to 5'-d(GCC)(n)-3' trinucleotide repeats in promoter regions and acts as a repressor of the FMR1 gene. Transcriptional repressor of MYC and thymidine kinase promoters. This chain is Zinc finger and BTB domain-containing protein 14 (ZBTB14), found in Homo sapiens (Human).